We begin with the raw amino-acid sequence, 192 residues long: Small ribosomal subunit protein eS7 (192 aa).

It belongs to the eukaryotic ribosomal protein eS7 family.

The protein is Small ribosomal subunit protein eS7 (RPS7) of Secale cereale (Rye).